The chain runs to 468 residues: ATP synthase subunit beta (468 aa).

Residue 155-162 (GGAGVGKT) coordinates ATP.

Belongs to the ATPase alpha/beta chains family. F-type ATPases have 2 components, CF(1) - the catalytic core - and CF(0) - the membrane proton channel. CF(1) has five subunits: alpha(3), beta(3), gamma(1), delta(1), epsilon(1). CF(0) has three main subunits: a(1), b(2) and c(9-12). The alpha and beta chains form an alternating ring which encloses part of the gamma chain. CF(1) is attached to CF(0) by a central stalk formed by the gamma and epsilon chains, while a peripheral stalk is formed by the delta and b chains.

It localises to the cell membrane. It carries out the reaction ATP + H2O + 4 H(+)(in) = ADP + phosphate + 5 H(+)(out). Its function is as follows. Produces ATP from ADP in the presence of a proton gradient across the membrane. The catalytic sites are hosted primarily by the beta subunits. In Streptococcus equi subsp. zooepidemicus (strain H70), this protein is ATP synthase subunit beta.